A 62-amino-acid polypeptide reads, in one-letter code: Small ribosomal subunit protein bS21 (62 aa).

It belongs to the bacterial ribosomal protein bS21 family.

This is Small ribosomal subunit protein bS21 (rpsU) from Mycoplasma genitalium (strain ATCC 33530 / DSM 19775 / NCTC 10195 / G37) (Mycoplasmoides genitalium).